A 385-amino-acid chain; its full sequence is Zinc finger protein B385R (385 aa).

A C2H2-type zinc finger spans residues 166-190; the sequence is LQCPNCGCIQELMGTIFDETHFYNH.

It belongs to the asfivirus B385R family.

The chain is Zinc finger protein B385R from Ornithodoros (relapsing fever ticks).